Here is a 314-residue protein sequence, read N- to C-terminus: Ornithine carbamoyltransferase (314 aa).

Residues 58–61 (STRT), Gln85, Arg109, and 136–139 (HPLQ) contribute to the carbamoyl phosphate site. L-ornithine contacts are provided by residues Asn168, Asp232, and 236–237 (SM). Carbamoyl phosphate is bound by residues 272 to 273 (CL) and Arg300.

Belongs to the aspartate/ornithine carbamoyltransferase superfamily. OTCase family.

It localises to the cytoplasm. It catalyses the reaction carbamoyl phosphate + L-ornithine = L-citrulline + phosphate + H(+). The protein operates within amino-acid biosynthesis; L-arginine biosynthesis; L-arginine from L-ornithine and carbamoyl phosphate: step 1/3. Reversibly catalyzes the transfer of the carbamoyl group from carbamoyl phosphate (CP) to the N(epsilon) atom of ornithine (ORN) to produce L-citrulline. This is Ornithine carbamoyltransferase from Hyperthermus butylicus (strain DSM 5456 / JCM 9403 / PLM1-5).